A 518-amino-acid polypeptide reads, in one-letter code: GMP synthase [glutamine-hydrolyzing] (518 aa).

The Glutamine amidotransferase type-1 domain maps to 8 to 201 (TVLIIDFGSQ…VCKISGIKNN (194 aa)). C85 acts as the Nucleophile in catalysis. Residues H175 and E177 contribute to the active site. The 192-residue stretch at 202–393 (WSMAAYRDQA…LGLPEEFIKR (192 aa)) folds into the GMPS ATP-PPase domain. ATP is bound at residue 229-235 (SGGVDSS).

In terms of assembly, homodimer.

The enzyme catalyses XMP + L-glutamine + ATP + H2O = GMP + L-glutamate + AMP + diphosphate + 2 H(+). It participates in purine metabolism; GMP biosynthesis; GMP from XMP (L-Gln route): step 1/1. Functionally, catalyzes the synthesis of GMP from XMP. This Bartonella bacilliformis (strain ATCC 35685 / KC583 / Herrer 020/F12,63) protein is GMP synthase [glutamine-hydrolyzing].